The chain runs to 391 residues: N-acetylaspartylglutamate synthase A (391 aa).

The ATP-grasp domain maps to 115–300 (FQELAGHGVP…VGGIIADYTM (186 aa)). ATP-binding positions include lysine 154, 189-199 (QKYVKESHGKD), and arginine 215. 3 residues coordinate Mg(2+): aspartate 260, glutamate 273, and asparagine 275. 3 residues coordinate Mn(2+): aspartate 260, glutamate 273, and asparagine 275. Serine 319 carries the phosphoserine modification. Positions 341 to 350 (TINSGSTSSE) are enriched in polar residues. The tract at residues 341-379 (TINSGSTSSESEPELGEIRDSSASTMGAPPSMLPEPGYN) is disordered.

Belongs to the RimK family. Requires Mg(2+) as cofactor. It depends on Mn(2+) as a cofactor.

It localises to the cytoplasm. It catalyses the reaction N-acetyl-L-aspartate + L-glutamate + ATP = N-acetyl-L-aspartyl-L-glutamate + ADP + phosphate + H(+). It carries out the reaction N-acetyl-L-aspartate + 2 L-glutamate + 2 ATP = N-acetyl-L-aspartyl-L-glutamyl-L-glutamate + 2 ADP + 2 phosphate + 2 H(+). Its function is as follows. Catalyzes the synthesis of N-acetyl-L-aspartyl-L-glutamate (NAAG) and N-acetyl-L-aspartyl-L-glutamyl-L-glutamate. The polypeptide is N-acetylaspartylglutamate synthase A (RIMKLA) (Homo sapiens (Human)).